The following is a 458-amino-acid chain: uncharacterized protein (458 aa).

A TRAM domain is found at 5–65 (QAPVNKNDVV…KGYGFGRVLN (61 aa)). Residues C78, C84, C87, and C165 each coordinate [4Fe-4S] cluster. The S-adenosyl-L-methionine site is built by Q289, Y318, E339, and D387. C414 functions as the Nucleophile in the catalytic mechanism.

This sequence belongs to the class I-like SAM-binding methyltransferase superfamily. RNA M5U methyltransferase family.

This is an uncharacterized protein from Halalkalibacterium halodurans (strain ATCC BAA-125 / DSM 18197 / FERM 7344 / JCM 9153 / C-125) (Bacillus halodurans).